The chain runs to 106 residues: Starvation responsive small protein A (106 aa).

A helical transmembrane segment spans residues 15–32 (ILLVNAGLISAYGVRIIF).

It localises to the cell membrane. Its function is as follows. Involved in starvation response and aggregation stage of the life cycle. May be involved in fruiting body morphogenesis and spore formation. The protein is Starvation responsive small protein A of Dictyostelium discoideum (Social amoeba).